Here is a 357-residue protein sequence, read N- to C-terminus: Ribosomal RNA large subunit methyltransferase M (357 aa).

S-adenosyl-L-methionine contacts are provided by residues Ser-183, Ala-216–Gly-219, Asp-235, Asp-255, and Asp-271. The active-site Proton acceptor is the Lys-300.

Belongs to the class I-like SAM-binding methyltransferase superfamily. RNA methyltransferase RlmE family. RlmM subfamily. As to quaternary structure, monomer.

The protein localises to the cytoplasm. It carries out the reaction cytidine(2498) in 23S rRNA + S-adenosyl-L-methionine = 2'-O-methylcytidine(2498) in 23S rRNA + S-adenosyl-L-homocysteine + H(+). Functionally, catalyzes the 2'-O-methylation at nucleotide C2498 in 23S rRNA. The chain is Ribosomal RNA large subunit methyltransferase M from Pseudomonas fluorescens (strain Pf0-1).